A 427-amino-acid polypeptide reads, in one-letter code: Adenylosuccinate synthetase (427 aa).

GTP contacts are provided by residues 13 to 19 (GDEGKGK) and 41 to 43 (GHT). The Proton acceptor role is filled by Asp-14. Residues Asp-14 and Gly-41 each coordinate Mg(2+). IMP contacts are provided by residues 14–17 (DEGK), 39–42 (NAGH), Thr-129, Arg-143, Gln-224, Thr-239, and Arg-303. The active-site Proton donor is the His-42. Positions 117-137 (QEKQRGEESLGTTKRGIGPAY) are disordered. 299–305 (TTTGRPR) lines the substrate pocket. Residues Arg-305, 331-333 (KLD), and 414-416 (GTG) each bind GTP.

Belongs to the adenylosuccinate synthetase family. As to quaternary structure, homodimer. Requires Mg(2+) as cofactor.

It localises to the cytoplasm. It catalyses the reaction IMP + L-aspartate + GTP = N(6)-(1,2-dicarboxyethyl)-AMP + GDP + phosphate + 2 H(+). Its pathway is purine metabolism; AMP biosynthesis via de novo pathway; AMP from IMP: step 1/2. Functionally, plays an important role in the de novo pathway of purine nucleotide biosynthesis. Catalyzes the first committed step in the biosynthesis of AMP from IMP. The protein is Adenylosuccinate synthetase of Caldicellulosiruptor saccharolyticus (strain ATCC 43494 / DSM 8903 / Tp8T 6331).